The following is a 171-amino-acid chain: UPF0398 protein SPy_1647/M5005_Spy1353 (171 aa).

This sequence belongs to the UPF0398 family.

The chain is UPF0398 protein SPy_1647/M5005_Spy1353 from Streptococcus pyogenes serotype M1.